Reading from the N-terminus, the 33-residue chain is Cytochrome b6-f complex subunit 8 (33 aa).

Residues 2–22 traverse the membrane as a helical segment; sequence LFTFAWASLAAIFTFSIAMVV.

It belongs to the PetN family. The 4 large subunits of the cytochrome b6-f complex are cytochrome b6, subunit IV (17 kDa polypeptide, PetD), cytochrome f and the Rieske protein, while the 4 small subunits are PetG, PetL, PetM and PetN. The complex functions as a dimer.

Its subcellular location is the cellular thylakoid membrane. Its function is as follows. Component of the cytochrome b6-f complex, which mediates electron transfer between photosystem II (PSII) and photosystem I (PSI), cyclic electron flow around PSI, and state transitions. The polypeptide is Cytochrome b6-f complex subunit 8 (Prochlorococcus marinus (strain MIT 9211)).